The chain runs to 67 residues: Minor structural pilin EpdD (67 aa).

The propeptide occupies 1–13; that stretch reads MSVALKKFFSKRG. The short motif at 14–22 is the QXSXEXXXL element; sequence QLSLEFSVL.

Post-translationally, the N-terminus is cleaved by the prepilin peptidase EppA, which recognizes the class III signal sequence. N-glycosylated. Glycosylation is AglB-dependent. The N-glycosylation does not occur unless the signal peptide has been cleaved first.

The protein resides in the secreted. Its subcellular location is the cell surface. It is found in the fimbrium. Minor component of the type IV-like pili. Essential for pili formation. The polypeptide is Minor structural pilin EpdD (Methanococcus maripaludis (strain DSM 14266 / JCM 13030 / NBRC 101832 / S2 / LL)).